The following is a 110-amino-acid chain: Parvalbumin alpha (110 aa).

S2 bears the N-acetylserine mark. A phosphoserine mark is found at S2 and S24. 2 consecutive EF-hand domains span residues 39-74 (KSAD…FSPD) and 78-110 (LSAK…VAES). 11 residues coordinate Ca(2+): D52, D54, S56, F58, E60, E63, D91, D93, D95, K97, and E102.

Belongs to the parvalbumin family.

Functionally, in muscle, parvalbumin is thought to be involved in relaxation after contraction. It binds two calcium ions. In Macaca fuscata fuscata (Japanese macaque), this protein is Parvalbumin alpha (PVALB).